Reading from the N-terminus, the 455-residue chain is Exodeoxyribonuclease 7 large subunit (455 aa).

Belongs to the XseA family. Heterooligomer composed of large and small subunits.

It localises to the cytoplasm. It carries out the reaction Exonucleolytic cleavage in either 5'- to 3'- or 3'- to 5'-direction to yield nucleoside 5'-phosphates.. Its function is as follows. Bidirectionally degrades single-stranded DNA into large acid-insoluble oligonucleotides, which are then degraded further into small acid-soluble oligonucleotides. This chain is Exodeoxyribonuclease 7 large subunit, found in Escherichia coli (strain SMS-3-5 / SECEC).